A 133-amino-acid polypeptide reads, in one-letter code: MSMSDPIGDMLTRIRNAGRAKHETCLVPGSKIKKSILDLMKEEGFIKDYESVKVNETFEDYKVFLKYDHTKRPIIRELVRVSTPGRRVYIKSAEIRPYKNNIGTLIVSTSKGIMTGKNARKLKLGGEVILKMS.

Belongs to the universal ribosomal protein uS8 family. Part of the 30S ribosomal subunit. Contacts proteins S5 and S12.

One of the primary rRNA binding proteins, it binds directly to 16S rRNA central domain where it helps coordinate assembly of the platform of the 30S subunit. This chain is Small ribosomal subunit protein uS8, found in Leptospira interrogans serogroup Icterohaemorrhagiae serovar copenhageni (strain Fiocruz L1-130).